Reading from the N-terminus, the 353-residue chain is WAT1-related protein At3g28100 (353 aa).

Transmembrane regions (helical) follow at residues 12-32 (AVFL…STLF), 43-63 (YAFL…SLFF), 81-101 (IGLL…GIEY), 105-125 (TLAS…AIIF), 137-157 (SVAK…VVLY), 187-207 (WLIG…SFIL), 219-239 (FTVS…IGLV), 252-272 (FDIT…YYVI), 283-303 (LYLA…SAVF), and 308-328 (LYLG…AVMW). One can recognise an EamA domain in the interval 27 to 155 (GISTLFKVAT…LSLIGALVVV (129 aa)).

The protein belongs to the drug/metabolite transporter (DMT) superfamily. Plant drug/metabolite exporter (P-DME) (TC 2.A.7.4) family.

It localises to the membrane. This is WAT1-related protein At3g28100 from Arabidopsis thaliana (Mouse-ear cress).